A 973-amino-acid polypeptide reads, in one-letter code: ATP-dependent DNA helicase homolog RECG1, chloroplastic/mitochondrial (973 aa).

A sufficient for chloroplastic and mitochondrial trgeting region spans residues 1 to 208; sequence MAAVTLSPCS…ATSEVEATSD (208 aa). A disordered region spans residues 174-200; it reads LLQNDDSSDPREDILDDGSSFTSKTAT. One can recognise a Helicase ATP-binding domain in the interval 536–725; sequence DLKRPVPMNR…LYGDISLTQI (190 aa). Residue 549 to 556 coordinates ATP; that stretch reads GDVGCGKT. The DEQQ box signature appears at 655 to 658; that stretch reads DEQQ. A Helicase C-terminal domain is found at 746–904; sequence GIKEVYSMML…GFYLANIDLL (159 aa).

The protein belongs to the helicase family. RecG subfamily. As to expression, expressed in most tissues, not seen in pollen, ovules or developing seeds.

It localises to the plastid. The protein localises to the chloroplast. Its subcellular location is the mitochondrion. The catalysed reaction is Couples ATP hydrolysis with the unwinding of duplex DNA by translocating in the 3'-5' direction.. The enzyme catalyses ATP + H2O = ADP + phosphate + H(+). In terms of biological role, plays a critical role in recombination and DNA repair. Helps process Holliday junction (HJ) intermediates to mature products by catalyzing branch migration. Has replication fork regression activity, unwinds stalled or blocked replication forks to make a HJ that can be resolved. Has a DNA unwinding activity characteristic of a DNA helicase with 3'-5' polarity. Functionally, plays a role in recombination surveillance and repair of double-stranded (ds)DNA breaks in the mitochondrion. May be able to dissociate D- and R-loops. Able to complement UV sensitivity of a recG deletion in E.coli. This Arabidopsis thaliana (Mouse-ear cress) protein is ATP-dependent DNA helicase homolog RECG1, chloroplastic/mitochondrial.